The sequence spans 434 residues: Cullin-like protein 5 (434 aa).

Residues 1-34 (MKRSISPDPFSSTKSPKLVHHSPDDGGAEGNPYR) form a disordered region.

It belongs to the cullin family.

The chain is Cullin-like protein 5 from Arabidopsis thaliana (Mouse-ear cress).